Consider the following 312-residue polypeptide: MERALPAAGFLYWVGASTIAYLTLRASYSLFRAFQVWCVGNQAFVGPRLGEWAVVTGGTDGIGKSYAEELAKRGMKIVLISRSQDKLKEVSNNIKEKFNVETRTIAVDFSLDDIYDKIKTGLSGLEIGVLVNNVGMSYEYPEYFLEIPDLDNTIKKLININVLSICKVTRLVLPGMVERSKGVILNISSASGMLPVPLLTVYSATKAFVDFFSQCLHEEYKSKGIFVQSVLPFFVATKLAKIRKPTLDKPSAETFVKSAIKTVGLQTRTTGYVIHAIMGSINSILPRWIYFKTIMGFNKSLRNRYLKKTKKN.

Residues 4-24 (ALPAAGFLYWVGASTIAYLTL) traverse the membrane as a helical segment. NADP(+) is bound at residue 50 to 79 (GEWAVVTGGTDGIGKSYAEELAKRGMKIVL). The next 2 helical transmembrane spans lie at 182–202 (GVILNISSASGMLPVPLLTVY) and 271–291 (GYVIHAIMGSINSILPRWIYF). Residue Ser189 coordinates substrate. Tyr202 functions as the Proton acceptor in the catalytic mechanism. Residues 308 to 312 (KTKKN) carry the Di-lysine motif motif.

Belongs to the short-chain dehydrogenases/reductases (SDR) family. 17-beta-HSD 3 subfamily.

The protein localises to the endoplasmic reticulum membrane. It catalyses the reaction a very-long-chain (3R)-3-hydroxyacyl-CoA + NADP(+) = a very-long-chain 3-oxoacyl-CoA + NADPH + H(+). It carries out the reaction 17beta-estradiol + NAD(+) = estrone + NADH + H(+). The catalysed reaction is 17beta-estradiol + NADP(+) = estrone + NADPH + H(+). The enzyme catalyses 3-oxooctadecanoyl-CoA + NADPH + H(+) = (3R)-hydroxyoctadecanoyl-CoA + NADP(+). It catalyses the reaction (7Z,10Z,13Z,16Z)-3-oxodocosatetraenoyl-CoA + NADPH + H(+) = (3R)-hydroxy-(7Z,10Z,13Z,16Z)-docosatetraenoyl-CoA + NADP(+). It carries out the reaction 3-oxo-(7Z,10Z,13Z,16Z,19Z)-docosapentaenoyl-CoA + NADPH + H(+) = (3R)-hydroxy-(7Z,10Z,13Z,16Z,19Z)-docosapentaenoyl-CoA + NADP(+). The catalysed reaction is (8Z,11Z,14Z)-3-oxoeicosatrienoyl-CoA + NADPH + H(+) = (3R)-hydroxy-(8Z,11Z,14Z)-eicosatrienoyl-CoA + NADP(+). It functions in the pathway lipid metabolism; fatty acid biosynthesis. It participates in steroid biosynthesis; estrogen biosynthesis. Its function is as follows. Catalyzes the second of the four reactions of the long-chain fatty acids elongation cycle. This endoplasmic reticulum-bound enzymatic process, allows the addition of two carbons to the chain of long- and very long-chain fatty acids/VLCFAs per cycle. This enzyme has a 3-ketoacyl-CoA reductase activity, reducing 3-ketoacyl-CoA to 3-hydroxyacyl-CoA, within each cycle of fatty acid elongation. Thereby, it may participate in the production of VLCFAs of different chain lengths that are involved in multiple biological processes as precursors of membrane lipids and lipid mediators. May also catalyze the transformation of estrone (E1) into estradiol (E2) and play a role in estrogen formation. The sequence is that of Very-long-chain 3-oxoacyl-CoA reductase from Rattus norvegicus (Rat).